The chain runs to 292 residues: Zinc finger protein OZF (292 aa).

C2H2-type zinc fingers lie at residues 16-38 (FACK…EHFH), 44-66 (FECN…QSTH), 72-94 (FECS…QKIH), 100-122 (FECK…QRTH), 128-150 (FICK…EKIH), 156-178 (FKCN…QNIH), 184-206 (YECN…VRIH), 212-234 (YECN…VRSH), 240-262 (YGCN…LRIH), and 268-290 (YQCS…QKIH). Residues Lys-28, Lys-51, and Lys-56 each participate in a glycyl lysine isopeptide (Lys-Gly) (interchain with G-Cter in SUMO2) cross-link. Residues Lys-157 and Lys-169 each participate in a glycyl lysine isopeptide (Lys-Gly) (interchain with G-Cter in SUMO) cross-link. A Glycyl lysine isopeptide (Lys-Gly) (interchain with G-Cter in SUMO2) cross-link involves residue Lys-173. Residues 212–292 (YECNVCGKAF…HIRHQKIHTH (81 aa)) are interaction with TERF2IP.

Belongs to the krueppel C2H2-type zinc-finger protein family. As to quaternary structure, binds DNA. Interacts with SUMO conjugating enzyme UBC9/UBE2I. Interacts with the telomeric protein TERF2IP. In terms of tissue distribution, expressed in heart, brain, liver, lung, skeletal muscle and kidney, and at much lower level in spleen and testicle. Expressed in lactating mammary gland.

Its subcellular location is the nucleus. The chain is Zinc finger protein OZF (Znf146) from Mus musculus (Mouse).